The chain runs to 1021 residues: Phytosulfokine receptor 1 (1021 aa).

The N-terminal stretch at 1–24 (MGVLRVYVILILVGFCVQIVVVNS) is a signal peptide. The LRR 1 repeat unit spans residues 21-43 (VVNSQNLTCNSNDLKALEGFMRG). 3 N-linked (GlcNAc...) asparagine glycosylation sites follow: asparagine 26, asparagine 54, and asparagine 83. 16 LRR repeats span residues 85 to 109 (SGRV…VAKL), 110 to 133 (DQLK…LLNL), 135 to 156 (NLEV…LINL), 158 to 180 (SLRV…LCNN), 181 to 205 (LPRI…IGNC), 206 to 229 (SSVE…LFQL), 231 to 252 (NLSV…KLGK), 253 to 277 (LSNL…FLEL), 301 to 325 (SRSI…CSAM), 326 to 349 (TNLT…LPNC), 351 to 372 (RLKT…SFKN), 373 to 397 (FQSL…EILQ), 402 to 426 (LKTL…QFKN), 428 to 448 (KVLI…LSNS), 449 to 474 (PSLQ…SLNS), and 476 to 496 (FYLD…LTSL). Asparagine 116 and asparagine 132 each carry an N-linked (GlcNAc...) asparagine glycan. N-linked (GlcNAc...) asparagine glycans are attached at residues asparagine 204, asparagine 217, and asparagine 231. Residues asparagine 311, asparagine 321, and asparagine 327 are each glycosylated (N-linked (GlcNAc...) asparagine). 2 N-linked (GlcNAc...) asparagine glycosylation sites follow: asparagine 383 and asparagine 388. N-linked (GlcNAc...) asparagine glycosylation is found at asparagine 482, asparagine 546, asparagine 568, asparagine 576, and asparagine 592. One copy of the LRR 18; atypical repeat lies at 498 to 555 (SLVSKENAVEEPSPDFPFFKKKNTNAGGLQYNQPSSFPPMIDLSYNSLNGSIWPEFGD). LRR repeat units lie at residues 556 to 580 (LRQL…LSGM), 581 to 604 (TSLE…LVKL), and 606 to 629 (FLST…QFQT). N-linked (GlcNAc...) asparagine glycosylation occurs at asparagine 632. The helical transmembrane segment at 673–693 (VAVGTGLGTVFLLTVTLLIIL) threads the bilayer. The Protein kinase domain maps to 743–1014 (FNQANIIGCG…PTTQQLVSWL (272 aa)). Residues 749-757 (IGCGGFGLV) and lysine 771 contribute to the ATP site. Residue aspartate 869 is the Proton acceptor of the active site.

Belongs to the protein kinase superfamily. Ser/Thr protein kinase family. N-glycosylated. As to expression, expressed ubiquitously in leaf, apical meristem, hypocotyl and root.

It localises to the cell membrane. The catalysed reaction is L-seryl-[protein] + ATP = O-phospho-L-seryl-[protein] + ADP + H(+). It carries out the reaction L-threonyl-[protein] + ATP = O-phospho-L-threonyl-[protein] + ADP + H(+). In terms of biological role, phytosulfokine receptor with a serine/threonine-protein kinase activity. Regulates, in response to phytosulfokine binding, a signaling cascade involved in plant cell differentiation, organogenesis and somatic embryogenesis. This Daucus carota (Wild carrot) protein is Phytosulfokine receptor 1 (PSKR).